Consider the following 37-residue polypeptide: Translationally-controlled tumor protein homolog (37 aa).

The region spanning 1 to 37 (MKIFRDILTNAEVVXDNDKPMDVLDEIVYAXQGRYIE) is the TCTP domain.

It belongs to the TCTP family. Monomer.

Its subcellular location is the cytoplasm. Its function is as follows. Binds calcium; exact function not known. The sequence is that of Translationally-controlled tumor protein homolog from Trypanosoma brucei brucei.